A 136-amino-acid polypeptide reads, in one-letter code: MGVYHGNDLKKPTGGKKRPHQKVKRKYWMGRYPTFTRLDNRDVRVHIRVRGGNYKIRLKRAAYANVIDPETNTARKVRILRVVETPANPHYARANIIVKGTIIETELGKAVVTSRPGQDGVINAVLIEKRSERPAG.

A disordered region spans residues 1-23 (MGVYHGNDLKKPTGGKKRPHQKV). Basic residues predominate over residues 13-23 (TGGKKRPHQKV).

Belongs to the eukaryotic ribosomal protein eS8 family. In terms of assembly, part of the 30S ribosomal subunit.

The chain is Small ribosomal subunit protein eS8 from Hyperthermus butylicus (strain DSM 5456 / JCM 9403 / PLM1-5).